A 585-amino-acid chain; its full sequence is Pre-hexon-linking protein IIIa (585 aa).

The tract at residues 1-24 (MMQDATDPAVRAALQSQPSGLNST) is disordered. The segment at 1–106 (MMQDATDPAV…ALLQRVARYN (106 aa)) is peripentonal hexon-tethering domain. Residues 14–24 (LQSQPSGLNST) show a composition bias toward polar residues. Residues 138 to 251 (GSMVALNAFL…FTDSGSVSRD (114 aa)) form a binding to hexon-linking protein region. The residue at position 225 (S225) is a Phosphoserine; by host. Phosphothreonine; by host is present on T274. Residues S310, S444, S449, S450, S452, S469, and S473 each carry the phosphoserine; by host modification. Residues 438–475 (AALRKESFRRPSSLSDLGAAAPRSDASSPFPSLIGSFT) form a disordered region. The span at 462 to 475 (DASSPFPSLIGSFT) shows a compositional bias: polar residues. Y490 bears the Phosphotyrosine; by host mark. Phosphoserine; by host is present on residues S494 and S515. The disordered stretch occupies residues 528–573 (QEHRDVPGPRPPTRRQRHDRQRGLVWEDDDSADDSSVLDLGGSGNP). The propeptide occupies 571–585 (GNPFAHLRPRLGRMF).

It belongs to the adenoviridae hexon-linking protein IIIa family. As to quaternary structure, interacts with hexon proteins; this interaction tethers the peripentonal hexons to hexons situated in the facet. Interacts with the penton protein (via N-terminus). Interacts with packaging protein 3; this interaction is required to promote correct genome packaging. Post-translationally, cleaved near the C-terminus by the viral protease during virion maturation to form the mature protein.

The protein localises to the virion. Its subcellular location is the host nucleus. Its function is as follows. Structural component of the virion that acts as a cement protein on the capsid exterior which mediates the interactions between the hexons, including the peripentonal hexons, and reaches all the way to the penton vertices. Two hexon linking proteins IIIa, one from each facet, stabilize the unique edge interface between a pair of facets. As the virus enters the host cell, hexon linking proteins IIIa are shed concomitant with virion acidification in the endosome. During virus assembly, seems to play a role in the serotype specificity of the packaging of viral DNA via its interaction with packaging protein 3. In Human adenovirus C serotype 2 (HAdV-2), this protein is Pre-hexon-linking protein IIIa.